Here is a 153-residue protein sequence, read N- to C-terminus: Large ribosomal subunit protein uL30 (153 aa).

Belongs to the universal ribosomal protein uL30 family. As to quaternary structure, part of the 50S ribosomal subunit.

The sequence is that of Large ribosomal subunit protein uL30 from Methanosarcina barkeri (strain Fusaro / DSM 804).